Here is a 732-residue protein sequence, read N- to C-terminus: DNA gyrase subunit B, mitochondrial (732 aa).

Residues 513-620 (SEIFIVEGDS…RYQRALFDAG (108 aa)) form the Toprim domain. Positions 519, 593, and 595 each coordinate Mg(2+).

The protein belongs to the type II topoisomerase GyrB family. Made up of two chains. The A chain is responsible for DNA breakage and rejoining; the B chain catalyzes ATP hydrolysis. Mg(2+) serves as cofactor. The cofactor is Mn(2+). Ca(2+) is required as a cofactor.

The protein localises to the mitochondrion. The catalysed reaction is ATP-dependent breakage, passage and rejoining of double-stranded DNA.. In terms of biological role, a type II topoisomerase that negatively supercoils closed circular double-stranded DNA in an ATP-dependent manner. In Arabidopsis thaliana (Mouse-ear cress), this protein is DNA gyrase subunit B, mitochondrial (GYRBM).